The primary structure comprises 1485 residues: Chromosome partition protein MukB (1485 aa).

34-41 serves as a coordination point for ATP; that stretch reads GGNGAGKS. Coiled-coil stretches lie at residues 337-480 and 509-605; these read LNLV…QAYQ and QHLA…PVWL. Residues 666 to 783 are flexible hinge; the sequence is PSGAEDARLI…EVPLFGRAAR (118 aa). Coiled coils occupy residues 835–915 and 977–1116; these read EAEI…IQQH and GMLT…AKAG.

It belongs to the SMC family. MukB subfamily. In terms of assembly, homodimerization via its hinge domain. Binds to DNA via its C-terminal region. Interacts, and probably forms a ternary complex, with MukE and MukF via its C-terminal region. The complex formation is stimulated by calcium or magnesium. Interacts with tubulin-related protein FtsZ.

It is found in the cytoplasm. The protein localises to the nucleoid. In terms of biological role, plays a central role in chromosome condensation, segregation and cell cycle progression. Functions as a homodimer, which is essential for chromosome partition. Involved in negative DNA supercoiling in vivo, and by this means organize and compact chromosomes. May achieve or facilitate chromosome segregation by condensation DNA from both sides of a centrally located replisome during cell division. This chain is Chromosome partition protein MukB, found in Yersinia pseudotuberculosis serotype IB (strain PB1/+).